The primary structure comprises 606 residues: Pro-secreted protein ORF2 (606 aa).

Residues 1 to 19 form the signal peptide; the sequence is MSLCRLLLMLAMCCGVSRG. The segment at 22–54 is disordered; it reads TLPAGGRRGQRRRDNSAQWSTQQRPEGAVGPAP. A Nuclear localization signal motif is present at residues 28–34; sequence RRGQRRR. Asn255 carries N-linked (GlcNAc...) asparagine; by host glycosylation. The particle formation stretch occupies residues 313–339; it reads ILGVLFNLADTVLGGLPSTLLRAASGQ. An N-linked (GlcNAc...) asparagine; by host glycan is attached at Asn510.

It belongs to the hepevirus capsid protein family. Homodimer. As to quaternary structure, self-assembles to form the capsid. The capsid is dominated by dimers that define the 30 morphological units. Interacts with phosphorylated protein ORF3. In terms of processing, N-glycosylated.

The protein localises to the secreted. Its subcellular location is the virion. It localises to the host cytoplasm. The protein resides in the host endoplasmic reticulum. It is found in the host Golgi apparatus. The protein localises to the host cell surface. Its subcellular location is the host nucleus. In terms of biological role, plays a role in the inhibition of host antibody-mediated neutralization without blocking viral cell entry. Its function is as follows. Forms an icosahedral capsid with a T=1 symmetry and a 34 nm diameter. The capsid is composed of 60 copies linked to each other. Binds to the 5' end of the genomic RNA to mediate genome encapsidation. This chain is Pro-secreted protein ORF2, found in Gallus gallus (Chicken).